We begin with the raw amino-acid sequence, 141 residues long: MYRIGELAKMAEVTPDTIRYYEKQQMMEHEVRTEGGFRLYTESDLQRLKFIRHARQLGFSLESIRELLSIRIDPEHHTCQESKGIVQERLQEVEARIAELQSMQRSLQRLNDACCGTAHSSVYCSILEALEQGASGVKSGC.

The HTH merR-type domain occupies 1 to 70 (MYRIGELAKM…LESIRELLSI (70 aa)). Positions 4–23 (IGELAKMAEVTPDTIRYYEK) form a DNA-binding region, H-T-H motif. The Zn(2+) site is built by Cys-114, Cys-115, His-119, and Cys-124.

Homodimer.

Functionally, zinc-responsive transcriptional regulator of zntA. This is HTH-type transcriptional regulator ZntR (zntR) from Escherichia coli O157:H7.